The sequence spans 466 residues: Cysteine--tRNA ligase 1 (466 aa).

Residue Cys-27 participates in Zn(2+) binding. The 'HIGH' region motif lies at 29–39 (PTVQSPPHIGH). 3 residues coordinate Zn(2+): Cys-211, His-236, and Glu-240. Residues 267 to 271 (KMSKS) carry the 'KMSKS' region motif. Lys-270 contributes to the ATP binding site.

Belongs to the class-I aminoacyl-tRNA synthetase family. In terms of assembly, monomer. The cofactor is Zn(2+).

Its subcellular location is the cytoplasm. It carries out the reaction tRNA(Cys) + L-cysteine + ATP = L-cysteinyl-tRNA(Cys) + AMP + diphosphate. This Tropheryma whipplei (strain TW08/27) (Whipple's bacillus) protein is Cysteine--tRNA ligase 1.